A 433-amino-acid chain; its full sequence is Probable exopolygalacturonase X (433 aa).

An N-terminal signal peptide occupies residues 1–21; that stretch reads MKLTQATTLLLSLGLSLPVEG. The interval 30–54 is disordered; that stretch reads VGPKPPFRPLPASTPRNKTCQVQSN. Residues 43 to 54 show a composition bias toward polar residues; that stretch reads TPRNKTCQVQSN. Asn46, Asn127, and Asn197 each carry an N-linked (GlcNAc...) asparagine glycan. Residues 229 to 250 form a PbH1 1 repeat; sequence SSNIVIQNSVINNGDDCVSFKP. Residue Asp243 is the Proton donor of the active site. Cys245 and Cys262 are disulfide-bonded. N-linked (GlcNAc...) asparagine glycans are attached at residues Asn251 and Asn263. The PbH1 2 repeat unit spans residues 252–272; sequence STEILVQNLHCNGSHGISVGS. Residue His266 is part of the active site. Residues Asn290, Asn295, Asn327, Asn352, and Asn362 are each glycosylated (N-linked (GlcNAc...) asparagine). The PbH1 3 repeat unit spans residues 325–346; the sequence is VQNITYDKMYIENVDWAIEVTQ. One copy of the PbH1 4 repeat lies at 360–403; the sequence is PSNLTISDVYFNDLTGVTSGKNDPNVGTIICSSPDVCSGIHATN. Cys390 and Cys396 are joined by a disulfide.

The protein belongs to the glycosyl hydrolase 28 family.

The protein localises to the secreted. The enzyme catalyses [(1-&gt;4)-alpha-D-galacturonosyl](n) + H2O = alpha-D-galacturonate + [(1-&gt;4)-alpha-D-galacturonosyl](n-1). In terms of biological role, specific in hydrolyzing the terminal glycosidic bond of polygalacturonic acid and oligogalacturonates. In Aspergillus flavus (strain ATCC 200026 / FGSC A1120 / IAM 13836 / NRRL 3357 / JCM 12722 / SRRC 167), this protein is Probable exopolygalacturonase X (pgaX).